Consider the following 351-residue polypeptide: Peptide chain release factor 1 (351 aa).

An N5-methylglutamine modification is found at Gln-229.

The protein belongs to the prokaryotic/mitochondrial release factor family. Post-translationally, methylated by PrmC. Methylation increases the termination efficiency of RF1.

The protein localises to the cytoplasm. Its function is as follows. Peptide chain release factor 1 directs the termination of translation in response to the peptide chain termination codons UAG and UAA. This Cereibacter sphaeroides (strain ATCC 17029 / ATH 2.4.9) (Rhodobacter sphaeroides) protein is Peptide chain release factor 1.